We begin with the raw amino-acid sequence, 86 residues long: Large ribosomal subunit protein bL27 (86 aa).

Belongs to the bacterial ribosomal protein bL27 family.

The polypeptide is Large ribosomal subunit protein bL27 (Xanthomonas oryzae pv. oryzae (strain PXO99A)).